The chain runs to 150 residues: Large ribosomal subunit protein bL9 (150 aa).

It belongs to the bacterial ribosomal protein bL9 family.

Functionally, binds to the 23S rRNA. This is Large ribosomal subunit protein bL9 from Streptococcus equi subsp. equi (strain 4047).